The chain runs to 206 residues: Imidazoleglycerol-phosphate dehydratase (206 aa).

The segment at 1 to 21 is disordered; that stretch reads MTALDSSRLLQPRTASVHRRT.

This sequence belongs to the imidazoleglycerol-phosphate dehydratase family.

Its subcellular location is the cytoplasm. It catalyses the reaction D-erythro-1-(imidazol-4-yl)glycerol 3-phosphate = 3-(imidazol-4-yl)-2-oxopropyl phosphate + H2O. It participates in amino-acid biosynthesis; L-histidine biosynthesis; L-histidine from 5-phospho-alpha-D-ribose 1-diphosphate: step 6/9. The polypeptide is Imidazoleglycerol-phosphate dehydratase (Synechococcus sp. (strain JA-2-3B'a(2-13)) (Cyanobacteria bacterium Yellowstone B-Prime)).